A 450-amino-acid chain; its full sequence is Tubulin alpha chain (450 aa).

GTP is bound at residue glutamine 11. Lysine 40 carries the N6-acetyllysine modification. GTP-binding residues include glutamate 71, serine 140, glycine 144, threonine 145, threonine 179, asparagine 206, and asparagine 228. Glutamate 71 lines the Mg(2+) pocket. Glutamate 254 is an active-site residue. Residues 431–450 (DYEEVGTDSVGEEDEEGEEY) form a disordered region.

Belongs to the tubulin family. As to quaternary structure, dimer of alpha and beta chains. A typical microtubule is a hollow water-filled tube with an outer diameter of 25 nm and an inner diameter of 15 nM. Alpha-beta heterodimers associate head-to-tail to form protofilaments running lengthwise along the microtubule wall with the beta-tubulin subunit facing the microtubule plus end conferring a structural polarity. Microtubules usually have 13 protofilaments but different protofilament numbers can be found in some organisms and specialized cells. The cofactor is Mg(2+). Post-translationally, some glutamate residues at the C-terminus are polyglycylated, resulting in polyglycine chains on the gamma-carboxyl group. Glycylation is mainly limited to tubulin incorporated into axonemes (cilia and flagella) whereas glutamylation is prevalent in neuronal cells, centrioles, axonemes, and the mitotic spindle. Both modifications can coexist on the same protein on adjacent residues, and lowering polyglycylation levels increases polyglutamylation, and reciprocally. The precise function of polyglycylation is still unclear. Some glutamate residues at the C-terminus are polyglutamylated, resulting in polyglutamate chains on the gamma-carboxyl group. Polyglutamylation plays a key role in microtubule severing by spastin (SPAST). SPAST preferentially recognizes and acts on microtubules decorated with short polyglutamate tails: severing activity by SPAST increases as the number of glutamates per tubulin rises from one to eight, but decreases beyond this glutamylation threshold. In terms of processing, acetylation of alpha chains at Lys-40 is located inside the microtubule lumen. This modification has been correlated with increased microtubule stability, intracellular transport and ciliary assembly. Post-translationally, undergoes a tyrosination/detyrosination cycle, the cyclic removal and re-addition of a C-terminal tyrosine residue by the enzymes tubulin tyrosine carboxypeptidase (MATCAP, VASH1 or VASH2) and tubulin tyrosine ligase (TTL), respectively. Tyrosination promotes microtubule interaction with CAP-Gly microtubule plus-end tracking proteins. Tyrosinated tubulins regulate the initiation of dynein-driven motility. In terms of processing, detyrosination is involved in metaphase plate congression by guiding chromosomes during mitosis. Detyrosination increases microtubules-dependent mechanotransduction in dystrophic cardiac and skeletal muscle. In cardiomyocytes, detyrosinated microtubules are required to resist to contractile compression during contraction.

It is found in the cytoplasm. Its subcellular location is the cytoskeleton. It catalyses the reaction GTP + H2O = GDP + phosphate + H(+). Tubulin is the major constituent of microtubules, a cylinder consisting of laterally associated linear protofilaments composed of alpha- and beta-tubulin heterodimers. Microtubules grow by the addition of GTP-tubulin dimers to the microtubule end, where a stabilizing cap forms. Below the cap, tubulin dimers are in GDP-bound state, owing to GTPase activity of alpha-tubulin. The polypeptide is Tubulin alpha chain (Oncorhynchus keta (Chum salmon)).